A 710-amino-acid chain; its full sequence is Amyloid beta precursor protein binding family B member 1 (710 aa).

Ser-135 is modified (phosphoserine). 2 disordered regions span residues 143-256 (EQGP…SDLP) and 276-300 (GTTQ…ESQL). Residues 145–173 (GPDEGEEKAAGEAEEDDEDEEEEEEEEDL) are compositionally biased toward acidic residues. The residue at position 204 (Lys-204) is an N6-acetyllysine. The segment covering 223 to 234 (SWATLSQGSPSY) has biased composition (polar residues). The WW domain maps to 253–285 (SDLPAGWMRVQDTSGTYYWHIPTGTTQWEPPGR). Low complexity predominate over residues 287–299 (SPSQGSSPQEESQ). Residues 370–509 (FAVRSLGWVE…SKIMSERRNA (140 aa)) enclose the PID 1 domain. Ser-459 carries the post-translational modification Phosphoserine; by PKC. Ser-517 is subject to Phosphoserine. The PID 2 domain maps to 542 to 699 (KFQVYYLGNV…RRGVQSLWGS (158 aa)). Phosphotyrosine; by ABL1 is present on Tyr-547. Ser-610 is subject to Phosphoserine; by SGK1. Lys-701 bears the N6-acetyllysine mark.

In terms of assembly, component of a complex, at least composed of APBB1, RASD1/DEXRAS1 and APP. Interacts (via PID domain 2) with APP (with the intracellular domain of the amyloid-beta precursor protein). Interacts (via PID domain 2) with RASD1/DEXRAS1; impairs the transcription activation activity. Interacts (via PID domain 1) with KAT5/TIP60. Interacts (via the WW domain) with the proline-rich region of APBB1IP. Interacts with TSHZ1 and TSHZ2. Interacts (via the WW domain) with histone H2AX (when phosphorylated on 'Tyr-142') and the proline-rich region of ENAH. Interacts with MAPK8. Interacts (via PID domain 1) with TSHZ3 (via homeobox domain). Interacts with SET. Found in a trimeric complex with HDAC1 and TSHZ3; the interaction between HDAC1 and APBB1 is mediated by TSHZ3. Interacts (via WWW domain) with NEK6. Interacts (via WWW domain) with ABL1. Interacts with RNF157. Interacts with ARF6. In terms of processing, polyubiquitination by RNF157 leads to degradation by the proteasome. Post-translationally, phosphorylation at Ser-610 by SGK1 promotes its localization to the nucleus. Phosphorylated following nuclear translocation. Phosphorylation at Tyr-546 by ABL1 enhances transcriptional activation activity and reduces the affinity for RASD1/DEXRAS1. Acetylation at Lys-204 and Lys-701 by KAT5 promotes its transcription activator activity. Phosphorylated at Ser-459 by PKC upon insulin activation. In terms of tissue distribution, expressed in the brain, retinal lens and muscle cells (at protein level).

Its subcellular location is the cell membrane. The protein localises to the cytoplasm. The protein resides in the nucleus. It is found in the cell projection. It localises to the growth cone. Its subcellular location is the nucleus speckle. In terms of biological role, transcription coregulator that can have both coactivator and corepressor functions. Adapter protein that forms a transcriptionally active complex with the gamma-secretase-derived amyloid precursor protein (APP) intracellular domain. Plays a central role in the response to DNA damage by translocating to the nucleus and inducing apoptosis. May act by specifically recognizing and binding histone H2AX phosphorylated on 'Tyr-142' (H2AXY142ph) at double-strand breaks (DSBs), recruiting other pro-apoptosis factors such as MAPK8/JNK1. Required for histone H4 acetylation at double-strand breaks (DSBs). Its ability to specifically bind modified histones and chromatin modifying enzymes such as KAT5/TIP60, probably explains its transcription activation activity. Functions in association with TSHZ3, SET and HDAC factors as a transcriptional repressor, that inhibits the expression of CASP4. Associates with chromatin in a region surrounding the CASP4 transcriptional start site(s). Involved in hippocampal neurite branching and neuromuscular junction formation, as a result plays a role in spatial memory functioning. Plays a role in the maintenance of lens transparency. May play a role in muscle cell strength. Acts as a molecular adapter that functions in neurite outgrowth by activating the RAC1-ARF6 axis upon insulin treatment. The sequence is that of Amyloid beta precursor protein binding family B member 1 from Mus musculus (Mouse).